The chain runs to 581 residues: Arginine--tRNA ligase (581 aa).

Positions 131-141 match the 'HIGH' region motif; sequence ANPTGPLHVGH.

The protein belongs to the class-I aminoacyl-tRNA synthetase family. Monomer.

The protein resides in the cytoplasm. It carries out the reaction tRNA(Arg) + L-arginine + ATP = L-arginyl-tRNA(Arg) + AMP + diphosphate. This chain is Arginine--tRNA ligase, found in Ruegeria pomeroyi (strain ATCC 700808 / DSM 15171 / DSS-3) (Silicibacter pomeroyi).